Here is a 198-residue protein sequence, read N- to C-terminus: Ribonuclease HII (198 aa).

Residues 10 to 198 (QLVAGVDEVG…PVKRALGLAS (189 aa)) enclose the RNase H type-2 domain. The a divalent metal cation site is built by D16, E17, and D108.

Belongs to the RNase HII family. It depends on Mn(2+) as a cofactor. Mg(2+) serves as cofactor.

The protein localises to the cytoplasm. It carries out the reaction Endonucleolytic cleavage to 5'-phosphomonoester.. Functionally, endonuclease that specifically degrades the RNA of RNA-DNA hybrids. In Shigella sonnei (strain Ss046), this protein is Ribonuclease HII.